A 345-amino-acid polypeptide reads, in one-letter code: uncharacterized protein (345 aa).

It belongs to the Gfo/Idh/MocA family. Biliverdin reductase subfamily.

This is an uncharacterized protein from Escherichia coli (strain K12).